Reading from the N-terminus, the 759-residue chain is Rab guanine nucleotide exchange factor SEC2 (759 aa).

Met-1 is modified (N-acetylmethionine). Positions 26–164 (DKQSHLEEQL…KKVMHSLDNE (139 aa)) form a coiled coil. Thr-168 is modified (phosphothreonine). A Phosphoserine modification is found at Ser-171. Residues 451–508 (TKNKPKMEIFSSETNAKPGQPTTNIQRAWLQLCKLRCILHWTHIGIWAVDDSISSKIG) form a required for proper polarized localization of the protein region. A Phosphoserine modification is found at Ser-515. A disordered region spans residues 538 to 759 (KRPFSSSSAE…DNFDDAQEQQ (222 aa)). Residues 555-576 (FDFESGDMENEITGESSSDESS) show a composition bias toward acidic residues. Low complexity-rich tracts occupy residues 577–589 (SDGS…TADS) and 597–612 (LADS…SPES). Over residues 648-664 (RSIIKKKAPQRKIQKKK) the composition is skewed to basic residues. Residues 651–682 (IKKKAPQRKIQKKKLLQDLDDLEEQFREESAI) are a coiled coil. Residues 690-703 (AESNVKQNISSKRA) show a composition bias toward polar residues. Residues 704-719 (SSGDENSKKDNNEKTL) are compositionally biased toward basic and acidic residues. A compositionally biased stretch (polar residues) spans 731 to 744 (EQIGENSPSSGLHA). Positions 732–759 (QIGENSPSSGLHASSSNDDNFDDAQEQQ) form a coiled coil. Residues 750-759 (DNFDDAQEQQ) are compositionally biased toward acidic residues.

It belongs to the SEC2 family. Interacts with SEC4. Interacts with YPT32, preferentially in its GTP-bound form.

It is found in the bud neck. The protein resides in the bud tip. Its subcellular location is the cytoplasmic vesicle. It localises to the secretory vesicle. Its function is as follows. Guanine nucleotide exchange factor for SEC4, catalyzing the dissociation of GDP from SEC4 and also potently promoting binding of GTP. Activation of SEC4 by SEC2 is needed for the directed transport of vesicles to sites of exocytosis. Binds the Rab GTPase YPT32, but does not have exchange activity on YPT32. The chain is Rab guanine nucleotide exchange factor SEC2 (SEC2) from Saccharomyces cerevisiae (strain ATCC 204508 / S288c) (Baker's yeast).